Consider the following 80-residue polypeptide: MPEQREKKKKDESDSVRAEGVVEEALPNTTFRVKLDTGHDILAYISGKMRIHYIRILPGDRVVLEISPYDTSRGRIVYRR.

In terms of domain architecture, S1-like spans 6-80 (EKKKKDESDS…TSRGRIVYRR (75 aa)).

The protein belongs to the IF-1 family. As to quaternary structure, component of the 30S ribosomal translation pre-initiation complex which assembles on the 30S ribosome in the order IF-2 and IF-3, IF-1 and N-formylmethionyl-tRNA(fMet); mRNA recruitment can occur at any time during PIC assembly.

Its subcellular location is the cytoplasm. In terms of biological role, one of the essential components for the initiation of protein synthesis. Stabilizes the binding of IF-2 and IF-3 on the 30S subunit to which N-formylmethionyl-tRNA(fMet) subsequently binds. Helps modulate mRNA selection, yielding the 30S pre-initiation complex (PIC). Upon addition of the 50S ribosomal subunit IF-1, IF-2 and IF-3 are released leaving the mature 70S translation initiation complex. This Deinococcus radiodurans (strain ATCC 13939 / DSM 20539 / JCM 16871 / CCUG 27074 / LMG 4051 / NBRC 15346 / NCIMB 9279 / VKM B-1422 / R1) protein is Translation initiation factor IF-1.